The sequence spans 505 residues: Lysine--tRNA ligase (505 aa).

Mg(2+) contacts are provided by Glu415 and Glu422.

Belongs to the class-II aminoacyl-tRNA synthetase family. In terms of assembly, homodimer. It depends on Mg(2+) as a cofactor.

It is found in the cytoplasm. The catalysed reaction is tRNA(Lys) + L-lysine + ATP = L-lysyl-tRNA(Lys) + AMP + diphosphate. The sequence is that of Lysine--tRNA ligase from Citrobacter koseri (strain ATCC BAA-895 / CDC 4225-83 / SGSC4696).